We begin with the raw amino-acid sequence, 495 residues long: Sialin (495 aa).

Residues M1 to D18 show a composition bias toward basic and acidic residues. The interval M1–P24 is disordered. The Cytoplasmic segment spans residues M1–N41. S3 is modified (phosphoserine). A Dileucine internalization motif motif is present at residues L22–L23. Residues L42 to V62 form a helical membrane-spanning segment. The Lumenal segment spans residues A63–G109. N71, N77, and N95 each carry an N-linked (GlcNAc...) asparagine glycan. A helical transmembrane segment spans residues W110 to A130. Over S131 to K136 the chain is Cytoplasmic. The helical transmembrane segment at M137 to A157 threads the bilayer. D158 is a topological domain (lumenal). Residues L159–F179 form a helical membrane-spanning segment. Over P180–S200 the chain is Cytoplasmic. The helical transmembrane segment at I201–C221 threads the bilayer. Topologically, residues Y222–T227 are lumenal. Residues Y228 to V248 traverse the membrane as a helical segment. At S249–S279 the chain is on the cytoplasmic side. The helical transmembrane segment at V280–S300 threads the bilayer. The Lumenal segment spans residues Y301 to G328. A helical membrane pass occupies residues F329–A349. The Cytoplasmic portion of the chain corresponds to D350 to R365. A helical transmembrane segment spans residues I366–G386. Topologically, residues C387–L391 are lumenal. The chain crosses the membrane as a helical span at residues A392–I412. Topologically, residues N413 to G423 are cytoplasmic. A helical membrane pass occupies residues I424–A444. Over K445–Q457 the chain is Lumenal. The chain crosses the membrane as a helical span at residues T458–A478. Residues K479–H495 are Cytoplasmic-facing.

Belongs to the major facilitator superfamily. Sodium/anion cotransporter family. In the adult, detected in placenta, kidney and pancreas. Abundant in the endothelial cells of tumors from ovary, colon, breast and lung, but is not detected in endothelial cells from the corresponding normal tissues. Highly expressed in salivary glands and liver, with lower levels of expression in brain, spleen kidney, muscle and pancreas. Expressed in acinar cells of salivary glands (at protein level).

It localises to the basolateral cell membrane. Its subcellular location is the cytoplasmic vesicle. The protein localises to the secretory vesicle. It is found in the synaptic vesicle membrane. The protein resides in the lysosome membrane. The catalysed reaction is N-acetylneuraminate(in) + H(+)(in) = N-acetylneuraminate(out) + H(+)(out). The enzyme catalyses D-glucuronate(out) + H(+)(out) = D-glucuronate(in) + H(+)(in). It catalyses the reaction 2 nitrate(out) + H(+)(out) = 2 nitrate(in) + H(+)(in). It carries out the reaction L-aspartate(out) = L-aspartate(in). The catalysed reaction is L-glutamate(out) = L-glutamate(in). The enzyme catalyses N-acetyl-L-aspartyl-L-glutamate(out) = N-acetyl-L-aspartyl-L-glutamate(in). Functionally, multifunctional anion transporter that operates via two distinct transport mechanisms, namely proton-coupled anion cotransport and membrane potential-dependent anion transport. Electroneutral proton-coupled acidic monosaccharide symporter, with a sugar to proton stoichiometry of 1:1. Exports glucuronic acid and free sialic acid derived from sialoglycoconjugate degradation out of lysosomes, driven by outwardly directed lysosomal pH gradient. May regulate lysosome function and metabolism of sialylated conjugates that impact oligodendrocyte lineage differentiation and myelinogenesis in the central nervous system. Electrogenic proton-coupled nitrate symporter that transports nitrate ions across the basolateral membrane of salivary gland acinar cells, with nitrate to proton stoichiometry of 2:1. May contribute to nitrate clearance from serum by salivary glands, where it is further concentrated and secreted in the saliva. Uses membrane potential to drive the uptake of acidic amino acids and peptides into synaptic vesicles. Responsible for synaptic vesicular storage of L-aspartate and L-glutamate in pinealocytes as well as vesicular uptake of N-acetyl-L-aspartyl-L-glutamate neuropeptide, relevant to aspartegic-associated glutamatergic neurotransmission and activation of metabotropic receptors that inhibit subsequent transmitter release. Its function is as follows. Receptor for CM101, a polysaccharide produced by group B Streptococcus with antipathoangiogenic properties. The protein is Sialin (SLC17A5) of Homo sapiens (Human).